We begin with the raw amino-acid sequence, 438 residues long: MADYQDKNVVIIGLGLTGLSCVDFFLARGVTPRVMDTRVTPPGLDKLPQEVERHVGGLNDEWLLAADLIVASPGIALAHPSLSAAASAGVEIVGDIELFCREAQEPIVAITGSNGKSTVTTLVGEMAKAAGVNVGVGGNIGLPALMLLDADRELYVLELSSFQLETTSSLQAAAATVLNVTEDHMDRYPFGLQQYRAAKLRVYEKAKVCVVNADDALTMPVRGADERCVSFGVNMGDYHLNRQQGETWLRVKGEKVLNVKEMKLSGQHNYTNALAALALADAVGLPRASSLKALTTFTGLAHRFQLALEHNGVRWINDSKATNVGSTEAALNGLHVDGTLHLLLGGDGKSADFSPLTRYLTGDRIRLYCFGRDGAQLAALRPEIAQQTETMEEAMRLLAPRVQPGDMVLLSPACASLDQFKNFEQRGDVFTRLAKELG.

112–118 (GSNGKST) is an ATP binding site.

Belongs to the MurCDEF family.

Its subcellular location is the cytoplasm. The enzyme catalyses UDP-N-acetyl-alpha-D-muramoyl-L-alanine + D-glutamate + ATP = UDP-N-acetyl-alpha-D-muramoyl-L-alanyl-D-glutamate + ADP + phosphate + H(+). Its pathway is cell wall biogenesis; peptidoglycan biosynthesis. Its function is as follows. Cell wall formation. Catalyzes the addition of glutamate to the nucleotide precursor UDP-N-acetylmuramoyl-L-alanine (UMA). In Salmonella choleraesuis (strain SC-B67), this protein is UDP-N-acetylmuramoylalanine--D-glutamate ligase.